A 101-amino-acid polypeptide reads, in one-letter code: Urease subunit beta (101 aa).

This sequence belongs to the urease beta subunit family. In terms of assembly, heterotrimer of UreA (gamma), UreB (beta) and UreC (alpha) subunits. Three heterotrimers associate to form the active enzyme.

It localises to the cytoplasm. It carries out the reaction urea + 2 H2O + H(+) = hydrogencarbonate + 2 NH4(+). It functions in the pathway nitrogen metabolism; urea degradation; CO(2) and NH(3) from urea (urease route): step 1/1. In Sinorhizobium fredii (strain NBRC 101917 / NGR234), this protein is Urease subunit beta.